The chain runs to 234 residues: Leucyl/phenylalanyl-tRNA--protein transferase (234 aa).

It belongs to the L/F-transferase family.

It is found in the cytoplasm. The enzyme catalyses N-terminal L-lysyl-[protein] + L-leucyl-tRNA(Leu) = N-terminal L-leucyl-L-lysyl-[protein] + tRNA(Leu) + H(+). The catalysed reaction is N-terminal L-arginyl-[protein] + L-leucyl-tRNA(Leu) = N-terminal L-leucyl-L-arginyl-[protein] + tRNA(Leu) + H(+). It carries out the reaction L-phenylalanyl-tRNA(Phe) + an N-terminal L-alpha-aminoacyl-[protein] = an N-terminal L-phenylalanyl-L-alpha-aminoacyl-[protein] + tRNA(Phe). In terms of biological role, functions in the N-end rule pathway of protein degradation where it conjugates Leu, Phe and, less efficiently, Met from aminoacyl-tRNAs to the N-termini of proteins containing an N-terminal arginine or lysine. This is Leucyl/phenylalanyl-tRNA--protein transferase from Pseudoalteromonas atlantica (strain T6c / ATCC BAA-1087).